A 79-amino-acid chain; its full sequence is Short neurotoxin 3 (79 aa).

An N-terminal signal peptide occupies residues 1–21 (MKTLLLTLVMVTIMCLDLGYT). Cystine bridges form between cysteine 24–cysteine 41, cysteine 34–cysteine 59, cysteine 63–cysteine 71, and cysteine 72–cysteine 77.

This sequence belongs to the three-finger toxin family. Short-chain subfamily. Type III alpha-neurotoxin sub-subfamily. As to expression, expressed by the venom gland.

It localises to the secreted. Its function is as follows. Binds with high affinity to muscle nicotinic acetylcholine receptor (nAChR) and hinders acetylcholine binding to the receptor, thereby impairing neuromuscular transmission. Competes with the binding of alpha-bungarotoxin on muscle AChR (from Torpedo) with an IC(50) of 0.30 uM. Causes muscle paralysis, spasms and increased respiration. The protein is Short neurotoxin 3 of Pseudonaja textilis (Eastern brown snake).